The following is an 82-amino-acid chain: Three-finger toxin MALT0063C (82 aa).

The first 21 residues, Met-1–Ser-21, serve as a signal peptide directing secretion. 4 cysteine pairs are disulfide-bonded: Cys-24–Cys-42, Cys-35–Cys-60, Cys-64–Cys-72, and Cys-73–Cys-78.

Belongs to the three-finger toxin family. Short-chain subfamily. As to expression, expressed by the venom gland.

It localises to the secreted. In Micrurus altirostris (Uruguayan coral snake), this protein is Three-finger toxin MALT0063C.